A 122-amino-acid chain; its full sequence is ATP synthase epsilon chain (122 aa).

Belongs to the ATPase epsilon chain family. F-type ATPases have 2 components, CF(1) - the catalytic core - and CF(0) - the membrane proton channel. CF(1) has five subunits: alpha(3), beta(3), gamma(1), delta(1), epsilon(1). CF(0) has three main subunits: a, b and c.

The protein localises to the cell membrane. Its function is as follows. Produces ATP from ADP in the presence of a proton gradient across the membrane. The polypeptide is ATP synthase epsilon chain (Rhodococcus jostii (strain RHA1)).